Reading from the N-terminus, the 906-residue chain is Toll-like receptor 12 (906 aa).

The first 21 residues, Met-1–Ser-21, serve as a signal peptide directing secretion. Residues Thr-22–Lys-709 lie on the Extracellular side of the membrane. Asn-59 carries an N-linked (GlcNAc...) asparagine glycan. LRR repeat units lie at residues Phe-91 to Leu-114, Gly-115 to Asp-140, Ile-142 to Gly-170, Ser-198 to Gly-222, Gln-224 to Lys-247, His-267 to Ser-290, Cys-291 to Ala-314, Pro-316 to Thr-338, Val-341 to Cys-364, Pro-366 to Glu-388, Leu-389 to Ala-412, Pro-414 to Gly-436, Leu-462 to Phe-484, Pro-485 to Gly-508, and Phe-510 to Asn-533. N-linked (GlcNAc...) asparagine glycosylation is present at Asn-336. Residue Asn-505 is glycosylated (N-linked (GlcNAc...) asparagine). Residue Asn-552 is glycosylated (N-linked (GlcNAc...) asparagine). LRR repeat units follow at residues Leu-562–Glu-586 and Leu-591–Arg-614. Residues Leu-710–Ala-730 form a helical membrane-spanning segment. The Cytoplasmic segment spans residues Arg-731–Gly-906. A TIR domain is found at Phe-759 to Leu-905.

It belongs to the Toll-like receptor family. In terms of assembly, binds MYD88 via their respective TIR domains. As to expression, macrophages, liver, kidney and bladder epithelial cells.

It localises to the membrane. In terms of biological role, participates in the innate immune response to microbial agents. Acts via MYD88 and TRAF6, leading to NF-kappa-B activation, cytokine secretion and the inflammatory response. Plays a role in preventing infection of internal organs of the urogenital system. This is Toll-like receptor 12 from Mus musculus (Mouse).